Here is a 131-residue protein sequence, read N- to C-terminus: MEHEYPDDLRYLDSHEYVRLDGEIATIGISAFAIEQLGDIVFLELPEVGEAVEVGESFGHIESVKAVEDLYPPVSGTVIERNEAMIDSPELIGDDPYGEGWLLKLRVVNPDNELDDTLTADEYRSQVEGEA.

A Lipoyl-binding domain is found at isoleucine 24 to arginine 106. Position 65 is an N6-lipoyllysine (lysine 65).

It belongs to the GcvH family. In terms of assembly, the glycine cleavage system is composed of four proteins: P, T, L and H. (R)-lipoate is required as a cofactor.

The glycine cleavage system catalyzes the degradation of glycine. The H protein shuttles the methylamine group of glycine from the P protein to the T protein. The chain is Glycine cleavage system H protein from Gloeothece citriformis (strain PCC 7424) (Cyanothece sp. (strain PCC 7424)).